The primary structure comprises 275 residues: Phosphate import ATP-binding protein PstB 1 (275 aa).

In terms of domain architecture, ABC transporter spans 22 to 261 (FNVEGVKVYY…SPTEQMFNSP (240 aa)). 54–61 (GPSGCGKS) contacts ATP.

The protein belongs to the ABC transporter superfamily. Phosphate importer (TC 3.A.1.7) family. In terms of assembly, the complex is composed of two ATP-binding proteins (PstB), two transmembrane proteins (PstC and PstA) and a solute-binding protein (PstS).

The protein resides in the cell inner membrane. The catalysed reaction is phosphate(out) + ATP + H2O = ADP + 2 phosphate(in) + H(+). In terms of biological role, part of the ABC transporter complex PstSACB involved in phosphate import. Responsible for energy coupling to the transport system. The polypeptide is Phosphate import ATP-binding protein PstB 1 (Trichormus variabilis (strain ATCC 29413 / PCC 7937) (Anabaena variabilis)).